The primary structure comprises 1356 residues: Vegetative incompatibility protein HET-E-1 (1356 aa).

In terms of domain architecture, NACHT spans R294 to K629. Position 300 to 307 (G300 to T307) interacts with GTP. WD repeat units lie at residues G839–D869, G881–D911, G923–D953, G965–D995, G1007–D1037, G1049–D1079, G1091–D1121, G1133–D1163, G1175–D1205, and G1217–D1247.

Its function is as follows. Responsible for vegetative incompatibility through specific interactions with different alleles of the unlinked gene, het-c. The protein is Vegetative incompatibility protein HET-E-1 (HET-E1) of Podospora anserina (Pleurage anserina).